We begin with the raw amino-acid sequence, 287 residues long: Aquaporin PIP2-1 (287 aa).

M1 carries the N-acetylmethionine modification. The Cytoplasmic segment spans residues 2–39 (AKDVEAVPGEGFQTRDYQDPPPAPFIDGAELKKWSFYR). Position 3 is an N6,N6-dimethyllysine; partial (K3). The helical transmembrane segment at 40 to 60 (AVIAEFVATLLFLYITVLTVI) threads the bilayer. At 61-83 (GYKIQSDTDAGGVDCGGVGILGI) the chain is on the extracellular side. Residues 84-104 (AWAFGGMIFILVYCTAGISGG) form a helical membrane-spanning segment. Over 105–125 (HINPAVTFGLFLARKVSLPRA) the chain is Cytoplasmic. Positions 107–109 (NPA) match the NPA 1 motif. A helical membrane pass occupies residues 126 to 146 (LLYIIAQCLGAICGVGFVKAF). Over 147-167 (QSSYYTRYGGGANSLADGYST) the chain is Extracellular. A helical transmembrane segment spans residues 168-188 (GTGLAAEIIGTFVLVYTVFSA). The Cytoplasmic segment spans residues 189–201 (TDPKRSARDSHVP). Residues 202 to 222 (VLAPLPIGFAVFMVHLATIPI) form a helical membrane-spanning segment. Over 223-249 (TGTGINPARSFGAAVIYNKSKPWDDHW) the chain is Extracellular. The NPA 2 signature appears at 228–230 (NPA). A helical membrane pass occupies residues 250–270 (IFWVGPFIGAAIAAFYHQFVL). The Cytoplasmic portion of the chain corresponds to 271 to 287 (RASGSKSLGSFRSAANV). Residues S280 and S283 each carry the phosphoserine modification.

Belongs to the MIP/aquaporin (TC 1.A.8) family. PIP (TC 1.A.8.11) subfamily. Ubiquitinated by RMA1, leading to proteasomal degradation. Post-translationally, the phosphorylation at Ser-280 and Ser-283 is altered by salt (NaCl) and hydrogen peroxide H(2)O(2) treatments. Phosphorylation of Ser-283 is required for plasma membrane targeting. As to expression, predominantly expressed in roots and green siliques. Also expressed at lower level above ground and in flower buds.

Its subcellular location is the cell membrane. Its function is as follows. Water channel required to facilitate the transport of water across cell membrane. Probably involved in root water uptake. Its function is impaired by Hg(2+). The sequence is that of Aquaporin PIP2-1 (PIP2-1) from Arabidopsis thaliana (Mouse-ear cress).